Consider the following 487-residue polypeptide: Serine/threonine-protein kinase BSK8 (487 aa).

Glycine 2 is lipidated: N-myristoyl glycine. Serine 20 is subject to Phosphoserine. The Protein kinase domain maps to 59 to 325 (ENIVSEHGER…DLEIASHQLL (267 aa)). Residues 65–73 (HGERAPNVV), asparagine 71, lysine 87, and 133–135 (EFM) contribute to the ATP site. Residue aspartate 181 is the Proton acceptor of the active site. Residues 185 to 186 (YR) and asparagine 205 each bind ATP. Serine 213 bears the Phosphoserine mark.

This sequence belongs to the protein kinase superfamily. Ser/Thr protein kinase family. In terms of assembly, interacts with ASK7/BIN2, BSK1, BSK5, BSK6 and BSK11. Interacts with BSL2. In terms of processing, phosphorylated by BRI1, ASK7/BIN2 and ASK9/BIL2.

Its subcellular location is the cell membrane. It catalyses the reaction L-seryl-[protein] + ATP = O-phospho-L-seryl-[protein] + ADP + H(+). It carries out the reaction L-threonyl-[protein] + ATP = O-phospho-L-threonyl-[protein] + ADP + H(+). Its function is as follows. Probable serine/threonine kinase that acts as a positive regulator of brassinosteroid (BR) signaling downstream of the receptor kinase BRI1. Functions redundantly with BSK3, BSK4, BSK6 and BSK7. Involved in the regulation of sucrose-phosphate synthase 1 (SPS1) in the context of sucrose resuply after starvation. Activates BSL2, a phosphatase that may dephosphorylate SPS1, leading to the activation of SPS1. This Arabidopsis thaliana (Mouse-ear cress) protein is Serine/threonine-protein kinase BSK8.